Reading from the N-terminus, the 167-residue chain is MANHPLTLEKDGFIVTTLDAAMAAAQKNSLWYMTFGLARCAVEMMHAAGARYDMDRFGMIPRASPRQCDLMIVAGTLTNKMAPAMRRVYDQMAEPRYVVSMGSCANGGGYYHYGYSVVRGCDRIVPVDVYVPGCPPTAEALVYDLMQLQRKVAERSTHSRPKLFARP.

This sequence belongs to the complex I 20 kDa subunit family. As to quaternary structure, NDH-1 is composed of 14 different subunits. Subunits NuoB, C, D, E, F, and G constitute the peripheral sector of the complex.

It is found in the cell inner membrane. The catalysed reaction is a quinone + NADH + 5 H(+)(in) = a quinol + NAD(+) + 4 H(+)(out). Its function is as follows. NDH-1 shuttles electrons from NADH, via FMN and iron-sulfur (Fe-S) centers, to quinones in the respiratory chain. Couples the redox reaction to proton translocation (for every two electrons transferred, four hydrogen ions are translocated across the cytoplasmic membrane), and thus conserves the redox energy in a proton gradient. This is Putative NADH-quinone oxidoreductase subunit B 2 from Burkholderia pseudomallei (strain 1710b).